Consider the following 434-residue polypeptide: UDP-glucose 6-dehydrogenase (434 aa).

NAD(+) contacts are provided by residues 2 to 19, valine 11, aspartate 30, lysine 35, threonine 121, and glutamate 152; that span reads NITF…GIIM. Residues 148 to 152, lysine 204, asparagine 208, 249 to 253, and glycine 257 contribute to the substrate site; these read EFLRE and FLNAG. Cysteine 260 (nucleophile) is an active-site residue. Lysine 263 is an NAD(+) binding site. Lysine 321 contacts substrate. Arginine 328 is a binding site for NAD(+).

This sequence belongs to the UDP-glucose/GDP-mannose dehydrogenase family.

The catalysed reaction is UDP-alpha-D-glucose + 2 NAD(+) + H2O = UDP-alpha-D-glucuronate + 2 NADH + 3 H(+). Its pathway is nucleotide-sugar biosynthesis; UDP-alpha-D-glucuronate biosynthesis; UDP-alpha-D-glucuronate from UDP-alpha-D-glucose: step 1/1. The polypeptide is UDP-glucose 6-dehydrogenase (udg) (Rickettsia prowazekii (strain Madrid E)).